Consider the following 158-residue polypeptide: Ribosome maturation factor RimP (158 aa).

This sequence belongs to the RimP family.

It is found in the cytoplasm. Functionally, required for maturation of 30S ribosomal subunits. This Lactobacillus acidophilus (strain ATCC 700396 / NCK56 / N2 / NCFM) protein is Ribosome maturation factor RimP.